The primary structure comprises 247 residues: RNA-free ribonuclease P (247 aa).

Residues 223 to 247 (SPEGEKEKGEADKKKKSHSEEAEFI) form a disordered region.

Belongs to the HARP family.

It carries out the reaction Endonucleolytic cleavage of RNA, removing 5'-extranucleotides from tRNA precursor.. In terms of biological role, RNA-free RNase P that catalyzes the removal of the 5'-leader sequence from pre-tRNA to produce the mature 5'-terminus. The sequence is that of RNA-free ribonuclease P from Methanosarcina acetivorans (strain ATCC 35395 / DSM 2834 / JCM 12185 / C2A).